The primary structure comprises 4351 residues: Protocadherin Fat 2 (4351 aa).

The N-terminal stretch at 1–18 (MTLVLLGLAILLLHRAAC) is a signal peptide. The Extracellular segment spans residues 19–4050 (EKSLEETIPP…IKRGDWGQQE (4032 aa)). Cadherin domains lie at 34–148 (THSL…KPLF) and 149–256 (SPPS…PPAI). 4 N-linked (GlcNAc...) asparagine glycosylation sites follow: Asn-39, Asn-210, Asn-280, and Asn-330. Cadherin domains are found at residues 363–458 (EKAV…APVF), 459–564 (NRSS…QPMF), 565–669 (EEVN…VPVQ), 716–820 (DHFP…PPRF), 821–925 (PPGG…PPQC), 926–1032 (ITEH…SPHF), 1033–1142 (SSFV…RPVF), 1138–1242 (SRPV…PPMF), 1243–1346 (SHKL…SSIP), 1350–1448 (DESY…RPQF), 1449–1555 (LQDH…SPHF), 1556–1660 (TQLR…APVF), 1661–1758 (SKDE…PPAF), 1759–1872 (GKPT…PPRF), 1873–1968 (SEQI…SLQF), 1969–2070 (DQDV…IPEF), 2071–2171 (QHLP…NPLF), 2172–2272 (QSPY…PPTF), 2273–2379 (SQLV…PPKF), 2380–2481 (REPQ…SPEF), 2482–2585 (QQNV…APQF), 2586–2692 (KASG…LPKF), 2693–2799 (SEPL…RPVF), 2800–2908 (EADP…PPRF), 2909–3013 (ASED…SPQC), 3014–3115 (SQLL…APRF), 3116–3220 (FPSH…LPIF), 3221–3323 (LNAE…HPRF), 3324–3428 (THDL…PPRF), 3429–3533 (FQLN…PPST), and 3534–3631 (LPLE…VPQQ). Residues Asn-459, Asn-568, Asn-627, and Asn-789 are each glycosylated (N-linked (GlcNAc...) asparagine). A glycan (N-linked (GlcNAc...) asparagine) is linked at Asn-996. Residues Asn-1175, Asn-1276, and Asn-1417 are each glycosylated (N-linked (GlcNAc...) asparagine). Asn-1899, Asn-1998, Asn-2007, Asn-2102, Asn-2165, Asn-2183, Asn-2325, Asn-2368, Asn-2387, Asn-2430, Asn-2470, Asn-2547, and Asn-2597 each carry an N-linked (GlcNAc...) asparagine glycan. N-linked (GlcNAc...) asparagine glycans are attached at residues Asn-3127, Asn-3278, and Asn-3312. N-linked (GlcNAc...) asparagine glycans are attached at residues Asn-3432, Asn-3603, Asn-3770, Asn-3774, Asn-3815, Asn-3842, Asn-3875, and Asn-3906. The 172-residue stretch at 3775 to 3946 (GTTLRFSGQS…RLETWALSQC (172 aa)) folds into the Laminin G-like domain. 4 cysteine pairs are disulfide-bonded: Cys-3914-Cys-3946, Cys-3953-Cys-3964, Cys-3958-Cys-3974, and Cys-3976-Cys-3985. EGF-like domains lie at 3949 to 3986 (PGTACSQSPCLNGGSCSPALGSGYLCRCPPPFSGRNCE) and 3988 to 4024 (GRENCTSAPCQEGGTCVSSPEGTSCNCPHPYTGDRCE). Asn-3991 carries N-linked (GlcNAc...) asparagine glycosylation. 3 cysteine pairs are disulfide-bonded: Cys-3992-Cys-4003, Cys-3997-Cys-4012, and Cys-4014-Cys-4023. A helical membrane pass occupies residues 4051-4071 (FLVITVALPLVIIATVGLLLY). Residues 4072–4351 (CRRRKSHKPV…DYGSCEEVMF (280 aa)) are Cytoplasmic-facing. The interval 4316 to 4340 (VNGGPATGRSQPRAPPNYEGSDMVE) is disordered.

As to quaternary structure, homodimer. In terms of tissue distribution, cerebellum-specific expression. Expressed in thin parallel fibers of cerebellar granule cells.

It is found in the cell membrane. The protein resides in the cell junction. Its subcellular location is the golgi apparatus. It localises to the trans-Golgi network. Involved in the regulation of cell migration. May be involved in mediating the organization of the parallel fibers of granule cells during cerebellar development. The protein is Protocadherin Fat 2 (Fat2) of Rattus norvegicus (Rat).